The chain runs to 652 residues: Acetyl-coenzyme A synthetase (652 aa).

Residues 191-194 (RAGR), T311, and N335 each bind CoA. ATP is bound by residues 387 to 389 (GEP), 411 to 416 (DTWWQT), D500, and R515. S523 serves as a coordination point for CoA. R526 is a binding site for ATP. Mg(2+)-binding residues include V537, H539, and I542. R584 is a CoA binding site. Residue K609 is modified to N6-acetyllysine.

The protein belongs to the ATP-dependent AMP-binding enzyme family. Requires Mg(2+) as cofactor. Post-translationally, acetylated. Deacetylation by the SIR2-homolog deacetylase activates the enzyme.

It catalyses the reaction acetate + ATP + CoA = acetyl-CoA + AMP + diphosphate. Its function is as follows. Catalyzes the conversion of acetate into acetyl-CoA (AcCoA), an essential intermediate at the junction of anabolic and catabolic pathways. Acs undergoes a two-step reaction. In the first half reaction, Acs combines acetate with ATP to form acetyl-adenylate (AcAMP) intermediate. In the second half reaction, it can then transfer the acetyl group from AcAMP to the sulfhydryl group of CoA, forming the product AcCoA. In terms of biological role, enables the cell to use acetate during aerobic growth to generate energy via the TCA cycle, and biosynthetic compounds via the glyoxylate shunt. Acetylates CheY, the response regulator involved in flagellar movement and chemotaxis. The chain is Acetyl-coenzyme A synthetase from Cronobacter sakazakii (strain ATCC BAA-894) (Enterobacter sakazakii).